Consider the following 137-residue polypeptide: uncharacterized protein (137 aa).

The first 15 residues, 1-15, serve as a signal peptide directing secretion; the sequence is MKKLAIAGALLLLAG. A lipid anchor (N-palmitoyl cysteine) is attached at Cys-16. Cys-16 is lipidated: S-diacylglycerol cysteine.

It localises to the cell membrane. This is an uncharacterized protein from Escherichia coli (strain K12).